Here is a 1696-residue protein sequence, read N- to C-terminus: uncharacterized protein (1696 aa).

4 disordered regions span residues 1–113 (MDSS…HPQY), 151–194 (DSWT…SRSR), 258–284 (DVTR…PEKK), and 299–376 (GRRE…KQRG). The span at 21–42 (LHPPSAPLPPPPPLPPPPPPRQ) shows a compositional bias: pro residues. Over residues 52–61 (GRSTQSNGQR) the composition is skewed to polar residues. Residues 96–113 (QQQHQPLSLQQQQQHPQY) show a composition bias toward low complexity. Residues 170 to 183 (RNYQYDYSRNSSGV) show a composition bias toward polar residues. Basic and acidic residues-rich tracts occupy residues 267–284 (EGAR…PEKK), 325–340 (ETPR…EWSR), and 358–376 (RGKE…KQRG). Serine 378 carries the phosphoserine modification. Disordered regions lie at residues 419–483 (RALL…GGKL), 688–724 (SDIG…LDSP), 1063–1090 (IKHK…GGTS), 1184–1211 (TSKS…VAGS), 1319–1340 (GEAV…SGVR), 1361–1429 (VVSV…SDAS), and 1658–1696 (SESR…DSGM). Basic and acidic residues-rich tracts occupy residues 421-436 (LLSD…ERNG) and 695-704 (DDNKRIDKNV). Serine 708 is modified (phosphoserine). Basic and acidic residues predominate over residues 1184-1204 (TSKSIEKIESSGGTSEHRTPE). Residues 1361–1370 (VVSVPHRDPQ) are compositionally biased toward basic and acidic residues. 3 stretches are compositionally biased toward polar residues: residues 1389–1398 (NYSTQKSYPS), 1658–1667 (SESRCNQSIS), and 1677–1696 (SAAN…DSGM).

This is an uncharacterized protein from Arabidopsis thaliana (Mouse-ear cress).